A 338-amino-acid polypeptide reads, in one-letter code: MSIRPATHAGSWYSNRAQELSQQLHTYLIKSTLKGPIHNARIIICPHAGYRYCGPTMAYSYASLDLNRNVKRIFILGPSHHIYFKNQILVSAFSELETPLGNLKVDTDLCKTLIQKEYPENGKKLFKPMDHDTDMAEHSLEMQLPMLVETLKWREISLDTVKVFPMMVSHNSVDVDRCIGNILSEYIKDPNNLFIVSSDFCHWGRRFQYTGYVGSKEELNDAIQEETEVEMLTARSKLSHHQVPIWQSIEIMDRYAMKTLSDTPNGERYDAWKQYLEITGNTICGEKPISVILSALSKIRDAGPSGIKFQWPNYSQSSHVTSIDDSSVSYASGYVTIG.

It belongs to the MEMO1 family.

It is found in the cytoplasm. Its subcellular location is the nucleus. In terms of biological role, plays a role in haploid invasive growth under conditions of nutrient insufficiency, suggesting that the function of the MEMO1 family in cell motility/invasion is conserved across species. This Saccharomyces cerevisiae (strain ATCC 204508 / S288c) (Baker's yeast) protein is MEMO1 family protein MHO1.